Consider the following 44-residue polypeptide: Thymosin beta-10 (44 aa).

It belongs to the thymosin beta family.

It is found in the cytoplasm. The protein localises to the cytoskeleton. Functionally, plays an important role in the organization of the cytoskeleton. Binds to and sequesters actin monomers (G actin) and therefore inhibits actin polymerization. The polypeptide is Thymosin beta-10 (Torpedo marmorata (Marbled electric ray)).